Here is a 119-residue protein sequence, read N- to C-terminus: Small ribosomal subunit protein uS13m (119 aa).

It belongs to the universal ribosomal protein uS13 family. In terms of assembly, component of the mitochondrial small ribosomal subunit (mt-SSU). Mature N.crassa 74S mitochondrial ribosomes consist of a small (37S) and a large (54S) subunit. The 37S small subunit contains a 16S ribosomal RNA (16S mt-rRNA) and 32 different proteins. The 54S large subunit contains a 23S rRNA (23S mt-rRNA) and 42 different proteins.

It localises to the mitochondrion. In terms of biological role, component of the mitochondrial ribosome (mitoribosome), a dedicated translation machinery responsible for the synthesis of mitochondrial genome-encoded proteins, including at least some of the essential transmembrane subunits of the mitochondrial respiratory chain. The mitoribosomes are attached to the mitochondrial inner membrane and translation products are cotranslationally integrated into the membrane. The sequence is that of Small ribosomal subunit protein uS13m (sws2) from Neurospora crassa (strain ATCC 24698 / 74-OR23-1A / CBS 708.71 / DSM 1257 / FGSC 987).